The sequence spans 75 residues: Sec-independent protein translocase protein TatA (75 aa).

The chain crosses the membrane as a helical span at residues 1–21 (MFGLSPAQLIILLVVILLIFG).

This sequence belongs to the TatA/E family. As to quaternary structure, the Tat system comprises two distinct complexes: a TatABC complex, containing multiple copies of TatA, TatB and TatC subunits, and a separate TatA complex, containing only TatA subunits. Substrates initially bind to the TatABC complex, which probably triggers association of the separate TatA complex to form the active translocon.

The protein resides in the cell inner membrane. In terms of biological role, part of the twin-arginine translocation (Tat) system that transports large folded proteins containing a characteristic twin-arginine motif in their signal peptide across membranes. TatA could form the protein-conducting channel of the Tat system. The chain is Sec-independent protein translocase protein TatA from Haemophilus influenzae (strain PittEE).